The sequence spans 556 residues: Formate--tetrahydrofolate ligase (556 aa).

Residue 65 to 72 (TPAGEGKS) coordinates ATP.

It belongs to the formate--tetrahydrofolate ligase family.

The enzyme catalyses (6S)-5,6,7,8-tetrahydrofolate + formate + ATP = (6R)-10-formyltetrahydrofolate + ADP + phosphate. It functions in the pathway one-carbon metabolism; tetrahydrofolate interconversion. The chain is Formate--tetrahydrofolate ligase from Clostridium acetobutylicum (strain ATCC 824 / DSM 792 / JCM 1419 / IAM 19013 / LMG 5710 / NBRC 13948 / NRRL B-527 / VKM B-1787 / 2291 / W).